The sequence spans 443 residues: UDP-glucuronic acid decarboxylase 4 (443 aa).

Ala-2 carries the post-translational modification N-acetylalanine. Residues 2–43 (ASELTNRRHEIEQPEAESYYPKPIKPWFVAIRPIRYMLREQR) are Cytoplasmic-facing. A helical; Signal-anchor for type II membrane protein membrane pass occupies residues 44–64 (LVFVLVGIAIATLGFTIFSKS). At 65 to 443 (SNHQPIPYDV…DSSTTSSSTE (379 aa)) the chain is on the lumenal side. 151 to 176 (DNFFTGRKENVMHHFNNPNFEMIRHD) is a binding site for NAD(+). Substrate is bound at residue Arg-260. Tyr-263 serves as the catalytic Proton acceptor. Residue 263-267 (YDEGK) participates in NAD(+) binding. Asn-292 serves as a coordination point for substrate. An NAD(+)-binding site is contributed by Arg-304. Substrate contacts are provided by residues 305–309 (VVSNF), 322–329 (YGDGKQTR), and 389–393 (DPHKR).

The protein belongs to the NAD(P)-dependent epimerase/dehydratase family. UDP-glucuronic acid decarboxylase subfamily. NAD(+) serves as cofactor.

The protein localises to the golgi apparatus. Its subcellular location is the golgi stack membrane. The catalysed reaction is UDP-alpha-D-glucuronate + H(+) = UDP-alpha-D-xylose + CO2. It functions in the pathway nucleotide-sugar biosynthesis; UDP-alpha-D-xylose biosynthesis; UDP-alpha-D-xylose from UDP-alpha-D-glucuronate: step 1/1. Its function is as follows. Catalyzes the NAD-dependent decarboxylation of UDP-glucuronic acid to UDP-xylose. Necessary for the biosynthesis of the core tetrasaccharide in glycosaminoglycan biosynthesis. The sequence is that of UDP-glucuronic acid decarboxylase 4 (UXS4) from Arabidopsis thaliana (Mouse-ear cress).